The following is a 231-amino-acid chain: MKPFRFKKFTVQQHKEVFRVGTDGVLLGALADVSDAKNILEVGTGTGLVALMTAQRNPTSNITAIDVNPVAAELAAKNFLESHFGHRMRAMHCDYKTFGTQKKFDLIISNPPYFETNPSEKDATARQQRELSFKTLISKTAEILATEGRFCVIIPFPAGPTFEKTCEENKLFLLRRITVYGNANVEPKRLILEFSSNKNISVSEEIFVTEKAPRVYSEQYLKATADFHEFE.

Belongs to the methyltransferase superfamily. tRNA (adenine-N(6)-)-methyltransferase family.

The protein localises to the cytoplasm. The enzyme catalyses adenosine(37) in tRNA1(Val) + S-adenosyl-L-methionine = N(6)-methyladenosine(37) in tRNA1(Val) + S-adenosyl-L-homocysteine + H(+). Functionally, specifically methylates the adenine in position 37 of tRNA(1)(Val) (anticodon cmo5UAC). This chain is tRNA1(Val) (adenine(37)-N6)-methyltransferase, found in Flavobacteriaceae bacterium (strain 3519-10).